A 452-amino-acid chain; its full sequence is Probable intron-encoded endonuclease 2 (452 aa).

Transmembrane regions (helical) follow at residues 1-21, 22-42, and 57-77; these read MNITLILFLIGILGFVLNRKN, IILMLISIEIMLLAITFLILV, and IYIIVVAGAESAIGLAILVAF. Residues 1–80 are ndh-4L exon 1 encoded; sequence MNITLILFLI…LAILVAFYRL (80 aa). The tract at residues 81 to 452 is ndh-4L intron 1 encoded; sequence INSPVKNPRS…SLEGGMNKNI (372 aa).

The protein in the N-terminal section; belongs to the complex I subunit 4L family. It in the C-terminal section; belongs to the LAGLIDADG endonuclease family.

Its subcellular location is the mitochondrion membrane. Its function is as follows. Mitochondrial DNA endonuclease involved in intron homing. This Neurospora crassa (strain ATCC 24698 / 74-OR23-1A / CBS 708.71 / DSM 1257 / FGSC 987) protein is Probable intron-encoded endonuclease 2.